Reading from the N-terminus, the 849-residue chain is MANILRKIIENDKGEIKKLEKTAKKVESYADAMAALSDEELQAKTEEFKQRYQNGESLDQLLPEAFAVVREGAKRVLGLFPYRVQIMGGIVLHHGDVAEMRTGEGKTLTATMPVYLNAISGEGVHVITVNEYLSERDATEMGELYSWLGLSVGINLSSKSPAEKREAYNCDITYSTSSEVGFDYLRDNMVVRKENMVQRPLNFALVDEVDSVLIDEARTPLIVSGPVSSETNQLYHRADAFVKTLTEDDYAIDIPTKTIGLNDSGIDKAEEFFNLENLYDIDNVALTHYIDNALRANYIMLRDIDYVVSPEQEILIVDQFTGRTMEGRRFSDGLHQAIEAKEGVPVQEETKTSASITYQNMFRMYKKLSGMTGTGKTEEDEFREIYNMRVIPIPTNRPIQRIDHDDLLYSTLDAKFRAVVQDVKRRYDKGQPVLIGTVAVETSDLISKMLVDAGIPHEVLNAKNHEKEAHIIMNAGQRGAVTIATNMAGRGTDIKLGEGVLELGGLCVIGTERHESRRIDNQLRGRSGRQGDPGESQFYLSLEDELMRRFGSDRIKHVLERLNADDEDIVIKSRMLTRQVESAQKRVEGNNYDTRKQVLQYDDVMREQREIIYAERYDVITAERDLEPEIKAMIKRTINRTVDGHSRNDQEEALKGILNFARQALVPEDAISLEDLKEVGEVTKRSVNYDAIKVYLTELADNVYDRQIKKLRSEEAIREFQKVLILMVVDNKWTDHIDALDQLRNAVGMRGYAQNNPIVEYQSESFKMFQDMIGAIEYDVTRTMMKAQIHEQSREHVNERVSTTATGNIQAHQADANGQEIDFSKVGRNDFCPCGSGKKFKNCHGRKQF.

Residues glutamine 85, 103 to 107 (GEGKT), and aspartate 493 each bind ATP. Residues cysteine 832, cysteine 834, cysteine 843, and histidine 844 each coordinate Zn(2+).

This sequence belongs to the SecA family. Monomer and homodimer. Part of the essential Sec protein translocation apparatus which comprises SecA, SecYEG and auxiliary proteins SecDF. Other proteins may also be involved. It depends on Zn(2+) as a cofactor.

It is found in the cell membrane. The protein localises to the cytoplasm. It catalyses the reaction ATP + H2O + cellular proteinSide 1 = ADP + phosphate + cellular proteinSide 2.. Part of the Sec protein translocase complex. Interacts with the SecYEG preprotein conducting channel. Has a central role in coupling the hydrolysis of ATP to the transfer of proteins into and across the cell membrane, serving as an ATP-driven molecular motor driving the stepwise translocation of polypeptide chains across the membrane. The chain is Protein translocase subunit SecA from Streptococcus thermophilus (strain CNRZ 1066).